A 234-amino-acid chain; its full sequence is Meiotically up-regulated gene 35 protein (234 aa).

The span at 126-156 (DSSGDLTSTDKERDVSPVSHSEKPYWDRYDL) shows a compositional bias: basic and acidic residues. The segment at 126 to 176 (DSSGDLTSTDKERDVSPVSHSEKPYWDRYDLDQPSNQDVEESRNLVQEPKH) is disordered. Ser-127 and Ser-128 each carry phosphoserine. Residue Thr-132 is modified to Phosphothreonine. Phosphoserine is present on Ser-141.

It localises to the cytoplasm. Has a role in meiosis. The protein is Meiotically up-regulated gene 35 protein (mug35) of Schizosaccharomyces pombe (strain 972 / ATCC 24843) (Fission yeast).